The chain runs to 890 residues: MESKSGRFPFPFQPYPIQESFMEALYTALDQRKVGIFESPTGTGKSLSLICGALTWLRDYEEQRKQEAARLLEGQKDSDVVKEKNSNSGPPEPDWVSEFVQKKAERDMVNKLKDEELKRKKREERLEMIRHNAQLRYAMKRKADEDDEAVKLLQLSREGAEPETHSPEEEGLIVAEYESDDEATPKSRLCDDDNDDDDDLEEEHVTKIYYCSRTHSQLAQFVHEVQKSPYGDAVRLVNLGSRQNLCINPEVVRLGNVQMMNERCLEMQKNKHEKRQKASDSESKRSRGLAKATCVFSRFENLMAMKDEVLVKVRDVEQLIQHGRETHTCPYYSTRMSIPAAQVVVLPYQSLLHASTRKASGIKLKDQIVIIDEAHNLMDTISAIHSAEISGGQLCRAHSQLSQYCERYRSRLKAKNLMYIKQILFVLEGLVRTLGGKVGQNPNTQSCQTGSELLTINDFLFKAQVDNINLFKVQKYFEKSMISRKLCGFAEKYEGSGINTHSSSKNKENRRTEGLGRFLQTLQSKPTDVSEQQMAVEDKPIMASPMMLAESFLFALTNANKDGRVVIQRQACVAQSSLKFLLLNAAVHFAQILQECRAVIIAGGTMQPVADFKEQLLFSAGVTEERILEFSCGHVIPPENILPIVLCAGPSGQQLEFTFQTRDSPQMMEETGRVLSNLCNIVPGGVVCFFPSYEYEKRILGHWESTGILQRLQSKKKIFQEPKKASQVEQVLSEYSKCIQRCSNIGGGQTGALLFSVVGGKMSEGINFSDDLGRCIVMVGMPYPNIKSPELQEKMAYLDKHMPHVAGKSPGKALVESLCMKAVNQSIGRAIRHRGDYACIVLCDHRYARTGTLQKLPEWIRSSTHTHATFGPAFASARRFFLEKRQKATL.

The Helicase ATP-binding domain occupies 4–424 (KSGRFPFPFQ…KNLMYIKQIL (421 aa)). An ATP-binding site is contributed by 39–46 (SPTGTGKS). Residues 71 to 85 (LLEGQKDSDVVKEKN) show a composition bias toward basic and acidic residues. Disordered regions lie at residues 71 to 95 (LLEG…EPDW) and 176 to 199 (EYES…DDDD). The [4Fe-4S] cluster site is built by cysteine 246, cysteine 264, cysteine 294, and cysteine 329. The short motif at 372–375 (DEAH) is the DEAH box element.

The protein belongs to the DEAD box helicase family. DEAH subfamily. DDX11/CHL1 sub-subfamily. [4Fe-4S] cluster is required as a cofactor.

It localises to the nucleus. It is found in the nucleolus. The protein localises to the cytoplasm. The protein resides in the cytoskeleton. Its subcellular location is the spindle pole. It localises to the midbody. It is found in the microtubule organizing center. The protein localises to the centrosome. It catalyses the reaction Couples ATP hydrolysis with the unwinding of duplex DNA at the replication fork by translocating in the 5'-3' direction. This creates two antiparallel DNA single strands (ssDNA). The leading ssDNA polymer is the template for DNA polymerase III holoenzyme which synthesizes a continuous strand.. The catalysed reaction is ATP + H2O = ADP + phosphate + H(+). In terms of biological role, DNA-dependent ATPase and ATP-dependent DNA helicase that participates in various functions in genomic stability, including DNA replication, DNA repair and heterochromatin organization as well as in ribosomal RNA synthesis. Plays a role in DNA double-strand break (DSB) repair at the DNA replication fork during DNA replication recovery from DNA damage. Plays a role in the regulation of sister chromatid cohesion and mitotic chromosome segregation. Stimulates 5'-single-stranded DNA flap endonuclease activity of FEN1 in an ATP- and helicase-independent manner. Also plays a role in heterochromatin organization. Involved in rRNA transcription activation through binding to active hypomethylated rDNA gene loci by recruiting UBTF and the RNA polymerase Pol I transcriptional machinery. Plays a role in embryonic development. Associates with chromatin at DNA replication fork regions. Binds to single- and double-stranded DNAs. The sequence is that of ATP-dependent DNA helicase DDX11 from Danio rerio (Zebrafish).